Consider the following 372-residue polypeptide: 4-hydroxy-3-methylbut-2-en-1-yl diphosphate synthase (flavodoxin) (372 aa).

Positions 270, 273, 305, and 312 each coordinate [4Fe-4S] cluster.

The protein belongs to the IspG family. [4Fe-4S] cluster is required as a cofactor.

It catalyses the reaction (2E)-4-hydroxy-3-methylbut-2-enyl diphosphate + oxidized [flavodoxin] + H2O + 2 H(+) = 2-C-methyl-D-erythritol 2,4-cyclic diphosphate + reduced [flavodoxin]. It functions in the pathway isoprenoid biosynthesis; isopentenyl diphosphate biosynthesis via DXP pathway; isopentenyl diphosphate from 1-deoxy-D-xylulose 5-phosphate: step 5/6. Its function is as follows. Converts 2C-methyl-D-erythritol 2,4-cyclodiphosphate (ME-2,4cPP) into 1-hydroxy-2-methyl-2-(E)-butenyl 4-diphosphate. The sequence is that of 4-hydroxy-3-methylbut-2-en-1-yl diphosphate synthase (flavodoxin) from Alcanivorax borkumensis (strain ATCC 700651 / DSM 11573 / NCIMB 13689 / SK2).